The primary structure comprises 705 residues: Polyribonucleotide nucleotidyltransferase (705 aa).

The Mg(2+) site is built by aspartate 486 and aspartate 492. The KH domain maps to 553 to 612; it reads PRIHTMKVSQDKIRDIIGKGGATIRQLTEETGTTIEIEDDGTVKIAATSGEQAEDAINRI. In terms of domain architecture, S1 motif spans 622–690; the sequence is GTLYTGKVVR…RQGRVRLSIK (69 aa).

Belongs to the polyribonucleotide nucleotidyltransferase family. In terms of assembly, component of the RNA degradosome, which is a multiprotein complex involved in RNA processing and mRNA degradation. It depends on Mg(2+) as a cofactor.

The protein resides in the cytoplasm. The enzyme catalyses RNA(n+1) + phosphate = RNA(n) + a ribonucleoside 5'-diphosphate. Involved in mRNA degradation. Catalyzes the phosphorolysis of single-stranded polyribonucleotides processively in the 3'- to 5'-direction. This chain is Polyribonucleotide nucleotidyltransferase, found in Colwellia psychrerythraea (strain 34H / ATCC BAA-681) (Vibrio psychroerythus).